Here is a 414-residue protein sequence, read N- to C-terminus: MAKTTKVKGNKKEVKASKQAKEEKAKAVSSSSSESSSSSSSSSESESESESESESSSSSSSSDSESSSSSSSDSESEAETKKEESKDSSSSSSDSSSDEEEEEEKEETKKEESKESSSSDSSSSSSSDSESEKEESNDKKRKSEDAEEEEDEESSNKKQKNEETEEPATIFVGRLSWSIDDEWLKKEFEHIGGVIGARVIYERGTDRSRGYGYVDFENKSYAEKAIQEMQGKEIDGRPINCDMSTSKPAGNNDRAKKFGDTPSEPSDTLFLGNLSFNADRDAIFELFAKHGEVVSVRIPTHPETEQPKGFGYVQFSNMEDAKKALDALQGEYIDNRPVRLDFSSPRPNNDGGRGGSRGFGGRGGGRGGNRGFGGRGGARGGRGGFRPSGSGANTAPLGRSRNTASFAGSKKTFD.

Disordered stretches follow at residues methionine 1–valine 172, serine 244–glutamate 264, and arginine 336–aspartate 414. Basic and acidic residues predominate over residues asparagine 10–lysine 26. Low complexity-rich tracts occupy residues alanine 27–glutamate 44 and glutamate 54–aspartate 73. The span at alanine 78 to aspartate 87 shows a compositional bias: basic and acidic residues. A phosphoserine mark is found at serine 93, serine 95, serine 96, serine 97, serine 116, serine 127, serine 129, serine 131, and serine 143. Positions serine 96–lysine 105 are enriched in acidic residues. Basic and acidic residues predominate over residues glutamate 106–serine 117. Positions serine 118–aspartate 128 are enriched in low complexity. Residues glutamate 134–glutamate 144 are compositionally biased toward basic and acidic residues. RRM domains follow at residues alanine 168 to serine 246 and aspartate 267 to proline 345. Positions glycine 351–arginine 386 are enriched in gly residues. Omega-N-methylarginine is present on arginine 353. An RGG-box region spans residues arginine 353–glycine 384. Asymmetric dimethylarginine; by HMT1; alternate occurs at positions 357, 362, and 366. Omega-N-methylarginine; by HMT1; alternate occurs at positions 357, 362, and 366. The tract at residues arginine 366 to glycine 384 is RNA-binding RGG-box. Arginine 370 bears the Omega-N-methylarginine mark. 3 positions are modified to asymmetric dimethylarginine; by HMT1; alternate: arginine 375, arginine 379, and arginine 382. 3 positions are modified to omega-N-methylarginine; by HMT1; alternate: arginine 375, arginine 379, and arginine 382. Arginine 386 carries the omega-N-methylarginine modification.

This sequence belongs to the RRM GAR family. In terms of processing, methylated by HMT1, forming asymmetric dimethylarginines (DMA) within a domain referred to as an RGG box, made up of repeated Gly-Gly dipeptides interspersed with Arg and aromatic residues. Pyrophosphorylated by 5-diphosphoinositol pentakisphosphate (5-IP7). Serine pyrophosphorylation is achieved by Mg(2+)-dependent, but enzyme independent transfer of a beta-phosphate from a inositol pyrophosphate to a pre-phosphorylated serine residue.

Its subcellular location is the nucleus. The protein resides in the nucleolus. In terms of biological role, involved in pre-rRNA processing. Specifically binds nuclear localization sequences. Candidate for a receptor at the nucleus that may be involved in both RNA and protein transport. Binds telomeric sequences of the type (TG[1-3])n in vitro. This Saccharomyces cerevisiae (strain ATCC 204508 / S288c) (Baker's yeast) protein is Nuclear localization sequence-binding protein.